An 84-amino-acid chain; its full sequence is Cell division topological specificity factor (84 aa).

Belongs to the MinE family.

Functionally, prevents the cell division inhibition by proteins MinC and MinD at internal division sites while permitting inhibition at polar sites. This ensures cell division at the proper site by restricting the formation of a division septum at the midpoint of the long axis of the cell. The chain is Cell division topological specificity factor from Pseudomonas putida (strain ATCC 700007 / DSM 6899 / JCM 31910 / BCRC 17059 / LMG 24140 / F1).